A 136-amino-acid chain; its full sequence is UPF0310 protein SMU_442 (136 aa).

The protein belongs to the UPF0310 family.

This chain is UPF0310 protein SMU_442, found in Streptococcus mutans serotype c (strain ATCC 700610 / UA159).